Here is a 136-residue protein sequence, read N- to C-terminus: Large-conductance mechanosensitive channel (136 aa).

Helical transmembrane passes span 10–30 and 76–96; these read FAMR…AAFG and GVFI…FMAI.

This sequence belongs to the MscL family. As to quaternary structure, homopentamer.

It localises to the cell inner membrane. In terms of biological role, channel that opens in response to stretch forces in the membrane lipid bilayer. May participate in the regulation of osmotic pressure changes within the cell. This Shigella boydii serotype 18 (strain CDC 3083-94 / BS512) protein is Large-conductance mechanosensitive channel.